A 146-amino-acid chain; its full sequence is Large ribosomal subunit protein uL15 (146 aa).

Over residues 1 to 13 (MKLHELKPAEGSR) the composition is skewed to basic and acidic residues. Residues 1–57 (MKLHELKPAEGSRKVRNRVGRGTSSGNGKTSGRGQKGQKARSGVGLRPGFEGGQTPL) form a disordered region. Residues 23–35 (TSSGNGKTSGRGQ) are compositionally biased toward gly residues.

This sequence belongs to the universal ribosomal protein uL15 family. In terms of assembly, part of the 50S ribosomal subunit.

Binds to the 23S rRNA. In Streptococcus thermophilus (strain ATCC BAA-491 / LMD-9), this protein is Large ribosomal subunit protein uL15.